We begin with the raw amino-acid sequence, 482 residues long: Zinc finger CCCH domain-containing protein 40 (482 aa).

The segment at 157 to 184 adopts a C3H1-type zinc-finger fold; that stretch reads RNRAHVCSFYVRGECTRGAECPYRHEMP. The RRM domain occupies 228 to 301; it reads RTLYIGGLNN…IRLKLMWGKP (74 aa). 2 stretches are compositionally biased toward low complexity: residues 329–347 and 389–428; these read SQQQ…GQQQ and PGPQ…YGGY. A disordered region spans residues 329 to 482; that stretch reads SQQQSGDQPQ…VPPPQQTTQN (154 aa). A compositionally biased stretch (pro residues) spans 429 to 446; it reads MPPPRMPYPPPPQYPPYQ. The span at 452–466 shows a compositional bias: low complexity; it reads PAQSQASSSQQPAPA. Positions 473–482 are enriched in pro residues; sequence VPPPQQTTQN.

The chain is Zinc finger CCCH domain-containing protein 40 from Oryza sativa subsp. japonica (Rice).